The following is a 199-amino-acid chain: Probable cobalt-precorrin-6B C(15)-methyltransferase (decarboxylating) (199 aa).

Residues threonine 24, 48 to 52 (GCGTG), aspartate 72, and alanine 101 contribute to the S-adenosyl-L-methionine site.

Belongs to the methyltransferase superfamily. Archaeal-type CbiT family.

It catalyses the reaction Co-precorrin-6B + S-adenosyl-L-methionine = Co-precorrin-7 + S-adenosyl-L-homocysteine + CO2. It functions in the pathway cofactor biosynthesis; adenosylcobalamin biosynthesis; cob(II)yrinate a,c-diamide from sirohydrochlorin (anaerobic route): step 8/10. Catalyzes the methylation of C-15 in cobalt-precorrin-6B followed by the decarboxylation of C-12 to form cobalt-precorrin-7. The chain is Probable cobalt-precorrin-6B C(15)-methyltransferase (decarboxylating) from Saccharolobus islandicus (strain Y.N.15.51 / Yellowstone #2) (Sulfolobus islandicus).